The sequence spans 345 residues: Protease HtpX homolog (345 aa).

Helical transmembrane passes span 6 to 26 and 27 to 47; these read TAMLLAFMTALFMGVGYLVGG and SNGMVIALLMAGGLNFFSYWN. His-130 lines the Zn(2+) pocket. Glu-131 is a catalytic residue. His-134 serves as a coordination point for Zn(2+). 2 helical membrane passes run 145–165 and 179–199; these read LTATIAGAISMLGNFAFFMGG and IGGLLALFVAPFAAMLVQMAI. Glu-204 is a binding site for Zn(2+).

The protein belongs to the peptidase M48B family. Zn(2+) serves as cofactor.

It localises to the cell inner membrane. This Bartonella henselae (strain ATCC 49882 / DSM 28221 / CCUG 30454 / Houston 1) (Rochalimaea henselae) protein is Protease HtpX homolog.